Consider the following 2563-residue polypeptide: Compactin diketide synthase mlcB (2563 aa).

In terms of domain architecture, Ketosynthase family 3 (KS3) spans 29–450 (STPIAIVGMG…GSNAHVILES (422 aa)). Catalysis depends on for beta-ketoacyl synthase activity residues Cys202, His337, and His372. Residues 568–915 (VFTGQGAQWH…TELISKGYGL (348 aa)) are acyl and malonyl transferase. The active-site For malonyltransferase activity is the Ser658. A compositionally biased stretch (basic and acidic residues) spans 951–960 (EPRGSRESKQ). The disordered stretch occupies residues 951–971 (EPRGSRESKQRTHPPHTLIGS). The interval 966 to 1103 (HTLIGSRESL…GLIRSESERS (138 aa)) is N-terminal hotdog fold. A PKS/mFAS DH domain is found at 966-1284 (HTLIGSRESL…FQSVGSSFSD (319 aa)). His998 serves as the catalytic Proton acceptor; for dehydratase activity. A dehydratase-like region spans residues 998 to 1010 (HVVGSSIIFPGAG). Positions 1121–1284 (DNRSIDPNDL…FQSVGSSFSD (164 aa)) are C-terminal hotdog fold. Catalysis depends on Asp1187, which acts as the Proton donor; for dehydratase activity. Residues 1542–1579 (YDVVVACQVLHATRCMKRTLSNVRKLLKPGGNLILVET) form a methyltransferase region. Residues 2485–2562 (EAISIVLKAM…GLVELVVAKC (78 aa)) form the Carrier domain. Ser2522 carries the post-translational modification O-(pantetheine 4'-phosphoryl)serine.

The cofactor is pantetheine 4'-phosphate.

It catalyses the reaction holo-[2-methylbutanoate polyketide synthase] + 2 malonyl-CoA + S-adenosyl-L-methionine + 2 NADPH + 3 H(+) = (S)-2-methylbutanoyl-[2-methylbutanoate polyketide synthase] + S-adenosyl-L-homocysteine + 2 CO2 + 2 NADP(+) + 2 CoA + H2O. It functions in the pathway polyketide biosynthesis. Its function is as follows. Diketide synthase; part of the gene cluster that mediates the biosynthesis of compactin, also known as mevastatin or ML-236B, and which acts as a potent competitive inhibitor of HMG-CoA reductase. Compactin biosynthesis is performed in two stages. The first stage is catalyzed by the nonaketide synthase mlcA, which belongs to type I polyketide synthases and catalyzes the iterative nine-step formation of the polyketide. This PKS stage is completed by the action of dehydrogenase mlcG, which catalyzes the NADPH-dependent reduction of the unsaturated tetra-, penta- and heptaketide intermediates that arise during the mlcA-mediated biosynthesis of the nonaketide chain and leads to dihydro-ML-236C carboxylate. Covalently bound dihydro-ML-236C carboxylate is released from mlcA by the mlcF esterase. Conversion of dihydro-ML-236C carboxylate into ML-236A carboxylate is subsequently performed with the participation of molecular oxygen and P450 monoogygenase mlcC. Finally, mlcH performs the conversion of ML-236A carboxylate to ML-236B/compactin carboxylate through the addition of the side-chain diketide moiety produced by the diketide synthase mlcB. In Penicillium citrinum, this protein is Compactin diketide synthase mlcB (mlcB).